Here is a 370-residue protein sequence, read N- to C-terminus: D-alanine--D-alanine ligase (370 aa).

Positions 144–352 (KKIFADAGIP…YSALIERLVD (209 aa)) constitute an ATP-grasp domain. Position 177–232 (177–232 (EEVLTYPVFVKPANLGSSVGISKATNKKELEDAMTEAFLYDRRVVVEQGVVAREIE)) interacts with ATP. Asp306, Glu319, and Asn321 together coordinate Mg(2+).

This sequence belongs to the D-alanine--D-alanine ligase family. The cofactor is Mg(2+). It depends on Mn(2+) as a cofactor.

The protein localises to the cytoplasm. The enzyme catalyses 2 D-alanine + ATP = D-alanyl-D-alanine + ADP + phosphate + H(+). The protein operates within cell wall biogenesis; peptidoglycan biosynthesis. Its function is as follows. Cell wall formation. This chain is D-alanine--D-alanine ligase, found in Listeria welshimeri serovar 6b (strain ATCC 35897 / DSM 20650 / CCUG 15529 / CIP 8149 / NCTC 11857 / SLCC 5334 / V8).